Consider the following 67-residue polypeptide: Large ribosomal subunit protein bL35 (67 aa).

The protein belongs to the bacterial ribosomal protein bL35 family.

This chain is Large ribosomal subunit protein bL35, found in Rhizobium etli (strain ATCC 51251 / DSM 11541 / JCM 21823 / NBRC 15573 / CFN 42).